A 376-amino-acid chain; its full sequence is Glutamate 5-kinase (376 aa).

Residue Lys-15 participates in ATP binding. Positions 56, 143, and 155 each coordinate substrate. Residue 175 to 176 (SD) participates in ATP binding. The PUA domain maps to 281–358 (KGTLTIDAGA…PDVMMILGIS (78 aa)).

Belongs to the glutamate 5-kinase family.

Its subcellular location is the cytoplasm. The catalysed reaction is L-glutamate + ATP = L-glutamyl 5-phosphate + ADP. Its pathway is amino-acid biosynthesis; L-proline biosynthesis; L-glutamate 5-semialdehyde from L-glutamate: step 1/2. Its function is as follows. Catalyzes the transfer of a phosphate group to glutamate to form L-glutamate 5-phosphate. This Rhodopseudomonas palustris (strain BisB5) protein is Glutamate 5-kinase.